A 315-amino-acid chain; its full sequence is Glutathione synthetase (315 aa).

The ATP-grasp domain maps to 125-310; the sequence is KLFTAWFSDL…ITGMLMDAIE (186 aa). Arginine 256 is a glycosylation site (N-beta-linked (GlcNAc) arginine). Residues glutamate 281 and asparagine 283 each coordinate Mg(2+).

It belongs to the prokaryotic GSH synthase family. Requires Mg(2+) as cofactor. The cofactor is Mn(2+). Glycosylation at Arg-256 by NleB enhances the glutathione synthetase activity, leading to an increase in glutathione production. Glycosylation may promote C.rodentium survival in oxidative stress conditions.

It carries out the reaction gamma-L-glutamyl-L-cysteine + glycine + ATP = glutathione + ADP + phosphate + H(+). It functions in the pathway sulfur metabolism; glutathione biosynthesis; glutathione from L-cysteine and L-glutamate: step 2/2. This is Glutathione synthetase from Citrobacter rodentium.